The following is a 225-amino-acid chain: Phosphoribosylformylglycinamidine synthase subunit PurQ (225 aa).

The Glutamine amidotransferase type-1 domain occupies 6–225 (FGVVVFPGSN…WQSILRSFAA (220 aa)). The active-site Nucleophile is Cys89. Residues His198 and Glu200 contribute to the active site.

As to quaternary structure, part of the FGAM synthase complex composed of 1 PurL, 1 PurQ and 2 PurS subunits.

It is found in the cytoplasm. It carries out the reaction N(2)-formyl-N(1)-(5-phospho-beta-D-ribosyl)glycinamide + L-glutamine + ATP + H2O = 2-formamido-N(1)-(5-O-phospho-beta-D-ribosyl)acetamidine + L-glutamate + ADP + phosphate + H(+). It catalyses the reaction L-glutamine + H2O = L-glutamate + NH4(+). Its pathway is purine metabolism; IMP biosynthesis via de novo pathway; 5-amino-1-(5-phospho-D-ribosyl)imidazole from N(2)-formyl-N(1)-(5-phospho-D-ribosyl)glycinamide: step 1/2. Its function is as follows. Part of the phosphoribosylformylglycinamidine synthase complex involved in the purines biosynthetic pathway. Catalyzes the ATP-dependent conversion of formylglycinamide ribonucleotide (FGAR) and glutamine to yield formylglycinamidine ribonucleotide (FGAM) and glutamate. The FGAM synthase complex is composed of three subunits. PurQ produces an ammonia molecule by converting glutamine to glutamate. PurL transfers the ammonia molecule to FGAR to form FGAM in an ATP-dependent manner. PurS interacts with PurQ and PurL and is thought to assist in the transfer of the ammonia molecule from PurQ to PurL. The chain is Phosphoribosylformylglycinamidine synthase subunit PurQ from Synechococcus sp. (strain JA-2-3B'a(2-13)) (Cyanobacteria bacterium Yellowstone B-Prime).